The chain runs to 412 residues: DNA replication and repair protein RecF (412 aa).

Residue 30 to 37 participates in ATP binding; sequence GANGAGKT. The interval 369 to 412 is disordered; the sequence is LQVRPGGGTAAVTPDPEYARGEATAANGAASAPTGADAASTSRD. A compositionally biased stretch (low complexity) spans 389–412; that stretch reads GEATAANGAASAPTGADAASTSRD.

The protein belongs to the RecF family.

It is found in the cytoplasm. Its function is as follows. The RecF protein is involved in DNA metabolism; it is required for DNA replication and normal SOS inducibility. RecF binds preferentially to single-stranded, linear DNA. It also seems to bind ATP. This is DNA replication and repair protein RecF from Salinibacter ruber (strain DSM 13855 / M31).